The following is a 627-amino-acid chain: MGLATTTSSMSQDYHHHQGIFSFSNGFHRSSSTTHQEEVDESAVVSGAQIPVYETAGMLSEMFAYPGGGGGGSGGEILDQSTKQLLEQQNRHNNNNNSTLHMLLPNHHQGFAFTDENTMQPQQQQHFTWPSSSSDHHQNRDMIGTVHVEGGKGLSLSLSSSLAAAKAEEYRSIYCAAVDGTSSSSNASAHHHQFNQFKNLLLENSSSQHHHHQVVGHFGSSSSSPMAASSSIGGIYTLRNSKYTKPAQELLEEFCSVGRGHFKKNKLSRNNSNPNTTGGGGGGGSSSSAGTANDSPPLSPADRIEHQRRKVKLLSMLEEVDRRYNHYCEQMQMVVNSFDQVMGYGAAVPYTTLAQKAMSRHFRCLKDAVAVQLKRSCELLGDKEAAGAASSGLTKGETPRLRLLEQSLRQQRAFHHMGMMEQEAWRPQRGLPERSVNILRAWLFEHFLNPYPSDADKHLLARQTGLSRNQVSNWFINARVRLWKPMVEEMYQQEAKEREEAEEENENQQQQRRQQQTNNNDTKPNNNENNFTVITAQTPTTMTSTHHENDSSFLSSVAAASHGGSDAFTVATCQQDVSDFHVDGDGVNVIRFGTKQTGDVSLTLGLRHSGNIPDKNTSFSVRDFGDF.

The disordered stretch occupies residues 206–225 (SSQHHHHQVVGHFGSSSSSP). The span at 215–225 (VGHFGSSSSSP) shows a compositional bias: low complexity. The tract at residues 241-257 (SKYTKPAQELLEEFCSV) is SR/KY domain. Residues 263-307 (KKNKLSRNNSNPNTTGGGGGGGSSSSAGTANDSPPLSPADRIEHQ) form a disordered region. Positions 302 to 373 (DRIEHQRRKV…CLKDAVAVQL (72 aa)) are BELL domain. A DNA-binding region (homeobox) is located at residues 424 to 486 (AWRPQRGLPE…NARVRLWKPM (63 aa)). Positions 494–530 (EAKEREEAEEENENQQQQRRQQQTNNNDTKPNNNENN) are disordered. Residues 507-530 (NQQQQRRQQQTNNNDTKPNNNENN) show a composition bias toward low complexity.

The protein belongs to the TALE/BELL homeobox family. May form heterodimeric complexes with TALE/KNOX proteins. Interacts with OFP1, OFP2 and OFP5. Interacts with KNATM, isoform KNATM-B. As to expression, expressed in lateral organs.

The protein localises to the nucleus. Functionally, transcription factor that establishes leaf shape by repressing growth in specific subdomains of the leaf. Negatively regulates knox homeobox gene KNAT1/BP expression. This chain is BEL1-like homeodomain protein 4 (BLH4), found in Arabidopsis thaliana (Mouse-ear cress).